The sequence spans 565 residues: Mitochondrial distribution and morphology protein 34 (565 aa).

One can recognise an SMP-LTD domain in the interval 1–208 (MAFNFNWSPL…VPEYRDRESE (208 aa)). Positions 209-220 (SVNTLDLSSESG) are enriched in polar residues. Disordered regions lie at residues 209–241 (SVNTLDLSSESGPGQDPLASPPQDPVDASGNAL), 347–463 (FGSY…SRSA), and 533–565 (MQEQKIDPSGSRPFPDFWDDHSREEIPPPAYGH). Over residues 353–367 (PGRHSRSHTKKRKKR) the composition is skewed to basic residues. Over residues 368–378 (VVDLRRPKTTD) the composition is skewed to basic and acidic residues. Residues 382–391 (SVSGDSVFSS) show a composition bias toward low complexity. Polar residues-rich tracts occupy residues 392–402 (ENATSAPTIFS) and 439–463 (QGDQTLRRSNLSMSEAAQPSSSRSA).

Belongs to the MDM34 family. In terms of assembly, component of the ER-mitochondria encounter structure (ERMES) or MDM complex, composed of mmm1, mdm10, mdm12 and mdm34.

The protein resides in the mitochondrion outer membrane. Its function is as follows. Component of the ERMES/MDM complex, which serves as a molecular tether to connect the endoplasmic reticulum (ER) and mitochondria. Components of this complex are involved in the control of mitochondrial shape and protein biogenesis, and function in nonvesicular lipid trafficking between the ER and mitochondria. Mdm34 is required for the interaction of the ER-resident membrane protein mmm1 and the outer mitochondrial membrane-resident beta-barrel protein mdm10. This Talaromyces marneffei (strain ATCC 18224 / CBS 334.59 / QM 7333) (Penicillium marneffei) protein is Mitochondrial distribution and morphology protein 34.